Consider the following 116-residue polypeptide: Nucleoid-associated protein PMM0020 (116 aa).

Basic and acidic residues predominate over residues 87–98 (ESSTTTMKERMN). The tract at residues 87–116 (ESSTTTMKERMNDLTGGLNLNLPGLDNNDS) is disordered. A compositionally biased stretch (low complexity) spans 99–116 (DLTGGLNLNLPGLDNNDS).

Belongs to the YbaB/EbfC family. Homodimer.

Its subcellular location is the cytoplasm. The protein localises to the nucleoid. Functionally, binds to DNA and alters its conformation. May be involved in regulation of gene expression, nucleoid organization and DNA protection. The sequence is that of Nucleoid-associated protein PMM0020 from Prochlorococcus marinus subsp. pastoris (strain CCMP1986 / NIES-2087 / MED4).